Reading from the N-terminus, the 541-residue chain is MRLCTAGRLKQLQGGLVNKAIEIKKLGQLEVLKASVPYTQDPTRLFHTICENKTDSLLLESAEIDSKQNLKSLLIVDSAVRIVCYGHTVSFHALTENGKNLLTHVNQNVRGEVASQFDGETLTLEFIQPCDTIDEDSRLREASSFDALRLVQHSFDLSSQDKHAIFLGGLFAYDLVANFEPLGDAVATNQCPDYVFYVAETLLVVDHQTESCQLQATLFVDGSQKAALESRIEDIRAQCTSPKRLPDATQVANITAQPSVPDQDFCQIVRDLKEFVVKGDIFQVVPSRRFTLPCPSPLAAYKELKQSNPSPYMFYMQDELFTLFGASPESALKYETDTNQIEIYPIAGTRRRGKRPNGEIDFDLDSRIELELRSDKKENAEHMMLVDLARNDVARISQAGTRHVADLLKVDRYSHVMHLVSRVVGQLRDDLDALHAYQACMNMGTLTGAPKIRAMQLIRDVEGARRGSYGGAVGYLTGEGTLDTCIVIRSAYVENGIAQVQAGAGVVFDSDPQAEADETRGKAQAVISAIQAAHSQPANKE.

Residues S61 and 311–313 (PYM) contribute to the L-tryptophan site. 348–349 (GT) provides a ligand contact to chorismate. E381 is a Mg(2+) binding site. Chorismate contacts are provided by residues Y469, R489, 503–505 (GAG), and G505. Mg(2+) is bound at residue E518.

Belongs to the anthranilate synthase component I family. Heterotetramer consisting of two non-identical subunits: a beta subunit (TrpG) and a large alpha subunit (TrpE). Mg(2+) serves as cofactor.

It catalyses the reaction chorismate + L-glutamine = anthranilate + pyruvate + L-glutamate + H(+). It functions in the pathway amino-acid biosynthesis; L-tryptophan biosynthesis; L-tryptophan from chorismate: step 1/5. With respect to regulation, feedback inhibited by tryptophan. Its function is as follows. Part of a heterotetrameric complex that catalyzes the two-step biosynthesis of anthranilate, an intermediate in the biosynthesis of L-tryptophan. In the first step, the glutamine-binding beta subunit (TrpG) of anthranilate synthase (AS) provides the glutamine amidotransferase activity which generates ammonia as a substrate that, along with chorismate, is used in the second step, catalyzed by the large alpha subunit of AS (TrpE) to produce anthranilate. In the absence of TrpG, TrpE can synthesize anthranilate directly from chorismate and high concentrations of ammonia. This chain is Anthranilate synthase component 1 (trpE), found in Vibrio parahaemolyticus serotype O3:K6 (strain RIMD 2210633).